We begin with the raw amino-acid sequence, 495 residues long: Serine/threonine protein phosphatase 2A 57 kDa regulatory subunit B' alpha isoform (495 aa).

Residues 1 to 13 show a composition bias toward basic residues; it reads MFKKIMKGANRKA. 2 disordered regions span residues 1-61 and 462-495; these read MFKK…AATT and QAKSKQVEEQRQNRWRRLDEAVEEREREDPMITS. The segment covering 49-61 has biased composition (polar residues); sequence VPSSPNSMAAATT.

Belongs to the phosphatase 2A regulatory subunit B56 family. PP2A consists of a common heteromeric enzyme, composed of a catalytic subunit (subunits C), a constant regulatory subunit (subunit A), and a variety of regulatory subunits such as subunits B (the R2/B/PR55/B55, R3/B''/PR72/PR130/PR59 and R5/B'/B56 families). Interacts with BZR1. Interacts with BRI1. Interacts with SRK2E/OST1. Expressed ubiquitously, higher levels in leaves.

It is found in the nucleus. Its subcellular location is the cytoplasm. In terms of biological role, the B regulatory subunit may modulate substrate selectivity and catalytic activity, and may also direct the localization of the catalytic enzyme to a particular subcellular compartment. Required for the formation of the PP2A holoenzyme that positively regulates brassinosteroid signaling by dephosphorylating and activating BZR1. The chain is Serine/threonine protein phosphatase 2A 57 kDa regulatory subunit B' alpha isoform (B'ALPHA) from Arabidopsis thaliana (Mouse-ear cress).